The chain runs to 297 residues: MLRLGSHVSMSGKKMLLGASEEAASYGSNTFMIYTGAPQNTRRKPIEELNIEAGLEHMKAHDMADIVVHAPYIINIGNSVKPETFELGVNFLQSEIERTRALGAKQIVLHPGAHVGEGADKGIKQIIQGLNEALIHDQDVQIALETMAGKGSECGRTFEEIAQIIDGVTHNELLSVTFDTCHTHDAGYDIVNDFDGVLNEFDKIIGVDRLKVLHINDSKNECGAHKDRHANIGFGHIGFDALHYIVHHPQLADVPKILETPYVGEDKASKKAPYKWEIAMLRNGEFDPDLLNKIQNS.

Residues H69, H110, E145, D179, H182, H214, D227, H229, and E259 each contribute to the Zn(2+) site.

It belongs to the AP endonuclease 2 family. It depends on Zn(2+) as a cofactor.

The enzyme catalyses Endonucleolytic cleavage to 5'-phosphooligonucleotide end-products.. Functionally, endonuclease IV plays a role in DNA repair. It cleaves phosphodiester bonds at apurinic or apyrimidinic (AP) sites, generating a 3'-hydroxyl group and a 5'-terminal sugar phosphate. In Listeria monocytogenes serotype 4b (strain CLIP80459), this protein is Probable endonuclease 4.